Consider the following 201-residue polypeptide: GTP cyclohydrolase 1 (201 aa).

3 residues coordinate Zn(2+): C90, H93, and C163.

The protein belongs to the GTP cyclohydrolase I family. In terms of assembly, toroid-shaped homodecamer, composed of two pentamers of five dimers.

The catalysed reaction is GTP + H2O = 7,8-dihydroneopterin 3'-triphosphate + formate + H(+). It functions in the pathway cofactor biosynthesis; 7,8-dihydroneopterin triphosphate biosynthesis; 7,8-dihydroneopterin triphosphate from GTP: step 1/1. This is GTP cyclohydrolase 1 (folE) from Streptomyces coelicolor (strain ATCC BAA-471 / A3(2) / M145).